Consider the following 538-residue polypeptide: Tetracenomycin C resistance and export protein (538 aa).

Helical transmembrane passes span 28–48 (LLAV…VAIA), 65–85 (WITN…GKLG), 100–120 (GFAV…IVVF), 126–146 (LFGA…FPPG), 154–174 (IWSG…GLLV), 181–201 (AVFF…LVIL), 213–233 (FDVS…WGLI), 239–259 (GWGD…FAGF), 286–306 (VLMV…TFYL), 319–339 (VHLL…GIVI), 342–362 (FGPG…LWGM), 371–391 (MGIT…VMVG), 413–433 (QSAM…LMAS), and 494–514 (MGLA…VALF).

This sequence belongs to the major facilitator superfamily. EmrB family.

It is found in the cell membrane. The protein operates within antibiotic biosynthesis; tetracenomycin C biosynthesis. In terms of biological role, resistance to tetracenomycin C by an active tetracenomycin C efflux system which is probably energized by transmembrane electrochemical gradients. The sequence is that of Tetracenomycin C resistance and export protein (tcmA) from Streptomyces glaucescens.